We begin with the raw amino-acid sequence, 741 residues long: uncharacterized protein (741 aa).

Residues 1–17 (MDSNTNENNSHASSNER) are compositionally biased toward polar residues. The tract at residues 1-50 (MDSNTNENNSHASSNERQSSEGHDDYLNRNPNSEATEGEEGTHPTTGTQP) is disordered. Residues 18 to 27 (QSSEGHDDYL) are compositionally biased toward basic and acidic residues. Residues 107–150 (CPICYDDMNENDEKQATKMPCGHIFGKNCLQKWLENHCTCPLCR) form an RING-type 1; degenerate zinc finger. Composition is skewed to polar residues over residues 177 to 193 (GNQGNTAVSQENASNGV), 252 to 263 (PDSNTSTPTTRS), and 277 to 302 (NASSRQETTPSDSRPSTLTSLFNAFF). 6 disordered regions span residues 177-214 (GNQGNTAVSQENASNGVHSDFHPSEELNNANTDGRTGV), 238-387 (SATN…NTNR), 500-543 (QPAV…PGIT), 561-619 (ENRM…TPTH), 638-688 (STPS…PQCQ), and 713-741 (RCQQSTSNSENQMDEEIGECPKCRNEEHK). Residues 316-332 (TSNLTSNSGSMTNSTST) show a composition bias toward low complexity. Composition is skewed to polar residues over residues 333–344 (DLPTSNLPSQNA) and 357–386 (PPNLLNLPTASPESTSWLPGSQTNIPANTN). Polar residues-rich tracts occupy residues 563-586 (RMNQTRSESSTPAQQSAAGSSINV), 604-619 (ENSSEVAGSRNQTPTH), and 652-661 (SKVSSGTSTP). Residues 687–736 (CQLEDQGICDPNDRFVHFECGHSVHERCQQSTSNSENQMDEEIGECPKCR) form an RING-type 2; degenerate zinc finger. Basic and acidic residues predominate over residues 731–741 (ECPKCRNEEHK).

Its subcellular location is the nucleus. This is an uncharacterized protein from Schizosaccharomyces pombe (strain 972 / ATCC 24843) (Fission yeast).